The primary structure comprises 506 residues: Pyruvate kinase 2 (506 aa).

Ser24 carries the phosphoserine modification. Residue Arg51 participates in substrate binding. Positions 53, 55, 86, and 87 each coordinate K(+). Residue 53–56 (NFSH) participates in ATP binding. Positions 93 and 179 each coordinate ATP. Glu244 provides a ligand contact to Mg(2+). Substrate is bound by residues Gly267, Asp268, and Thr300. Asp268 is a Mg(2+) binding site.

Belongs to the pyruvate kinase family. As to quaternary structure, homotetramer. Mg(2+) is required as a cofactor. It depends on K(+) as a cofactor.

It catalyses the reaction pyruvate + ATP = phosphoenolpyruvate + ADP + H(+). Its pathway is carbohydrate degradation; glycolysis; pyruvate from D-glyceraldehyde 3-phosphate: step 5/5. Not activated by fructose-1,6-bisphosphate. May be used by cells under conditions in which the level of glycolytic flux is very low. This is Pyruvate kinase 2 (PYK2) from Saccharomyces cerevisiae (strain ATCC 204508 / S288c) (Baker's yeast).